Here is a 391-residue protein sequence, read N- to C-terminus: Elongation factor Tu 1 (391 aa).

Positions 10–201 constitute a tr-type G domain; the sequence is KPHVNIGTIG…EVDNYIPTPE (192 aa). Residues 19–26 form a G1 region; the sequence is GHVDHGKT. 19–26 contacts GTP; it reads GHVDHGKT. Residue threonine 26 coordinates Mg(2+). Positions 55-59 are G2; that stretch reads GITIS. Residues 76 to 79 are G3; the sequence is DCPG. GTP is bound by residues 76-80 and 131-134; these read DCPGH and NKVD. A G4 region spans residues 131 to 134; the sequence is NKVD. Positions 169–171 are G5; that stretch reads SAL.

It belongs to the TRAFAC class translation factor GTPase superfamily. Classic translation factor GTPase family. EF-Tu/EF-1A subfamily. As to quaternary structure, monomer.

The protein localises to the cytoplasm. The catalysed reaction is GTP + H2O = GDP + phosphate + H(+). Its function is as follows. GTP hydrolase that promotes the GTP-dependent binding of aminoacyl-tRNA to the A-site of ribosomes during protein biosynthesis. The sequence is that of Elongation factor Tu 1 from Bartonella quintana (strain Toulouse) (Rochalimaea quintana).